The following is a 955-amino-acid chain: Probable autotransporter YcgV (955 aa).

The interval 616-659 (ASGTVPEPTPNPEPTPAPAQPPIVNPDPTPEPAPTPKPTTTADA) is disordered. Pro residues predominate over residues 622-652 (EPTPNPEPTPAPAQPPIVNPDPTPEPAPTPK). The 269-residue stretch at 687–955 (NQSKDGNIWL…QVNGGYRFSF (269 aa)) folds into the Autotransporter domain.

Upon overexpression shows increased adherence to polyvinyl chloride (PVC) plates, increased mature biofilm formation. In Escherichia coli (strain K12), this protein is Probable autotransporter YcgV (ycgV).